The following is a 231-amino-acid chain: Flagellar L-ring protein (231 aa).

The N-terminal stretch at 1-18 is a signal peptide; that stretch reads MKRFVSVVALSGVVSLAG. A lipid anchor (N-palmitoyl cysteine) is attached at Cys19. Cys19 is lipidated: S-diacylglycerol cysteine.

The protein belongs to the FlgH family. In terms of assembly, the basal body constitutes a major portion of the flagellar organelle and consists of four rings (L,P,S, and M) mounted on a central rod.

The protein localises to the cell outer membrane. It localises to the bacterial flagellum basal body. Its function is as follows. Assembles around the rod to form the L-ring and probably protects the motor/basal body from shearing forces during rotation. The chain is Flagellar L-ring protein from Pseudomonas fluorescens (strain Pf0-1).